The following is a 100-amino-acid chain: Putative septation protein SpoVG (100 aa).

It belongs to the SpoVG family.

Functionally, could be involved in septation. This chain is Putative septation protein SpoVG, found in Staphylococcus aureus (strain MRSA252).